Here is a 126-residue protein sequence, read N- to C-terminus: Protein ApaG (126 aa).

The ApaG domain occupies 2 to 126 (NQLAASVSVD…FRLSIPGLLH (125 aa)).

The polypeptide is Protein ApaG (Shewanella pealeana (strain ATCC 700345 / ANG-SQ1)).